A 352-amino-acid polypeptide reads, in one-letter code: Ion-translocating oxidoreductase complex subunit D (352 aa).

The next 5 helical transmembrane spans lie at 20–40, 42–62, 78–109, 123–143, and 148–168; these read IMLL…RFFG, GTLV…ALVL, ALLT…VIIA, PAMI…TSWL, and IAVN…GHTA. Residue T187 is modified to FMN phosphoryl threonine. The next 4 helical transmembrane spans lie at 214–234, 242–262, 267–287, and 301–318; these read ILAG…GVWL, WHIP…GWLF, LAAP…FFIL, and LMFG…RSFG.

The protein belongs to the NqrB/RnfD family. In terms of assembly, the complex is composed of six subunits: RsxA, RsxB, RsxC, RsxD, RsxE and RsxG. FMN is required as a cofactor.

It is found in the cell inner membrane. Part of a membrane-bound complex that couples electron transfer with translocation of ions across the membrane. Required to maintain the reduced state of SoxR. This Shigella flexneri protein is Ion-translocating oxidoreductase complex subunit D.